Consider the following 2799-residue polypeptide: Peramine synthetase ppzA (2799 aa).

The interval Q270–I666 is adenylation 1. One can recognise a Carrier 1 domain in the interval Q799–E875. O-(pantetheine 4'-phosphoryl)serine is present on S836. A condensation region spans residues D914–E1327. The adenylation 2 stretch occupies residues D1350–T1743. Positions L1874–I1970 are methylation (Met) domain. In terms of domain architecture, Carrier 2 spans S2290–D2368. Position 2327 is an O-(pantetheine 4'-phosphoryl)serine (S2327). The tract at residues T2420–D2737 is thiesterase (TE) domain.

This sequence belongs to the NRP synthetase family. Requires pantetheine 4'-phosphate as cofactor.

The catalysed reaction is (S)-1-pyrroline-5-carboxylate + L-arginine + S-adenosyl-L-methionine + 2 ATP = peramine + 2 AMP + S-adenosyl-L-homocysteine + 2 diphosphate + H2O + 2 H(+). It participates in secondary metabolite biosynthesis. Its function is as follows. Nonribosomal peptide synthetase; part of the gene cluster that mediates the biosynthesis of pyrrolopyrazines, secondary metabolites showing insecticidal activity. The single multifunctional NRPS ppzA is responsible for the biosynthesis of peramine. The condensation domain of ppzA is proposed to catalyze formation of a peptide bond between 1-pyrroline-5-carboxylate and arginine. The methylation domain of ppzA would catalyze the N-methylation of the alpha-amino group of arginine. The reductase domain is proposed to be responsible for reduction of the thioester and the cyclization to form an iminium ion resulting in release from the peptide synthetase. Deprotonation of this intermediate and oxidation of the pyrroline ring would give rise to peramine. This final oxidation to give the pyrrole functionality may be spontaneous. In Epichloe species that produce only peramine, the peramine synthetase gene is not localized in a gene cluster, in contrast to Metarhizium species that contain additional pyrrolopyrazine biosynthesis genes. The 2-oxoglutarate-Fe(II) type oxidoreductase ppzC hydroxylates peramine to yield the newly identified compound 8-hydroxyperamine whereas ppzD converts L-proline into trans-4-hydroxy-L-proline, a precursor of peramine biosynthesis. The sequence is that of Peramine synthetase ppzA from Metarhizium majus (strain ARSEF 297).